The sequence spans 476 residues: Transcription factor HBP-1b(c1) (476 aa).

Disordered regions lie at residues 1-29 (ESRR…FGAP), 133-159 (HNND…PDID), and 171-207 (QLAA…RKSR). The span at 10–25 (AAAAAAAGDPRGPMPG) shows a compositional bias: low complexity. The segment covering 135–144 (NDNWGESSMA) has biased composition (polar residues). Residues 180–191 (SSDKSRDKLDHK) show a composition bias toward basic and acidic residues. A bZIP domain is found at 189 to 252 (DHKSLRRLAQ…SSGDQSQSAS (64 aa)). Residues 191-211 (KSLRRLAQNREAARKSRLRKK) are basic motif. A coiled-coil region spans residues 201–242 (EAARKSRLRKKAYIQNLESSRLKLTQLEQELQRARQQGIFIS). Positions 217–231 (LESSRLKLTQLEQEL) are leucine-zipper. The DOG1 domain maps to 256–473 (AVAFDMEYAR…RALSSLWLAR (218 aa)).

The protein belongs to the bZIP family. Binds DNA as a dimer.

The protein localises to the nucleus. Functionally, transcriptional activator that binds specifically to the DNA sequence 5'-TGACG-3'. Recognizes ocs elements like the as-1 motif of the cauliflower mosaic virus 35S promoter. Binding to the as-1-like cis elements mediate auxin- and salicylic acid-inducible transcription. Binds to the hexamer motif 5'-ACGTCA-3' of histone gene promoters. The polypeptide is Transcription factor HBP-1b(c1) (Triticum aestivum (Wheat)).